The chain runs to 271 residues: Formamidopyrimidine-DNA glycosylase (271 aa).

Proline 2 acts as the Schiff-base intermediate with DNA in catalysis. Catalysis depends on glutamate 3, which acts as the Proton donor. Lysine 58 functions as the Proton donor; for beta-elimination activity in the catalytic mechanism. Histidine 92, arginine 111, and arginine 152 together coordinate DNA. The segment at threonine 237–arginine 271 adopts an FPG-type zinc-finger fold. The active-site Proton donor; for delta-elimination activity is arginine 261.

It belongs to the FPG family. Monomer. The cofactor is Zn(2+).

The enzyme catalyses Hydrolysis of DNA containing ring-opened 7-methylguanine residues, releasing 2,6-diamino-4-hydroxy-5-(N-methyl)formamidopyrimidine.. It carries out the reaction 2'-deoxyribonucleotide-(2'-deoxyribose 5'-phosphate)-2'-deoxyribonucleotide-DNA = a 3'-end 2'-deoxyribonucleotide-(2,3-dehydro-2,3-deoxyribose 5'-phosphate)-DNA + a 5'-end 5'-phospho-2'-deoxyribonucleoside-DNA + H(+). Its function is as follows. Involved in base excision repair of DNA damaged by oxidation or by mutagenic agents. Acts as a DNA glycosylase that recognizes and removes damaged bases. Has a preference for oxidized purines, such as 7,8-dihydro-8-oxoguanine (8-oxoG). Has AP (apurinic/apyrimidinic) lyase activity and introduces nicks in the DNA strand. Cleaves the DNA backbone by beta-delta elimination to generate a single-strand break at the site of the removed base with both 3'- and 5'-phosphates. This chain is Formamidopyrimidine-DNA glycosylase, found in Xanthomonas oryzae pv. oryzae (strain MAFF 311018).